Consider the following 420-residue polypeptide: Serine hydroxymethyltransferase (420 aa).

Residues Leu-121 and 125–127 (GHL) each bind (6S)-5,6,7,8-tetrahydrofolate. An N6-(pyridoxal phosphate)lysine modification is found at Lys-230. (6S)-5,6,7,8-tetrahydrofolate is bound by residues Glu-246 and 354–356 (SPF).

Belongs to the SHMT family. As to quaternary structure, homodimer. It depends on pyridoxal 5'-phosphate as a cofactor.

It is found in the cytoplasm. It carries out the reaction (6R)-5,10-methylene-5,6,7,8-tetrahydrofolate + glycine + H2O = (6S)-5,6,7,8-tetrahydrofolate + L-serine. The protein operates within one-carbon metabolism; tetrahydrofolate interconversion. It participates in amino-acid biosynthesis; glycine biosynthesis; glycine from L-serine: step 1/1. Its function is as follows. Catalyzes the reversible interconversion of serine and glycine with tetrahydrofolate (THF) serving as the one-carbon carrier. This reaction serves as the major source of one-carbon groups required for the biosynthesis of purines, thymidylate, methionine, and other important biomolecules. Also exhibits THF-independent aldolase activity toward beta-hydroxyamino acids, producing glycine and aldehydes, via a retro-aldol mechanism. This chain is Serine hydroxymethyltransferase, found in Rickettsia typhi (strain ATCC VR-144 / Wilmington).